We begin with the raw amino-acid sequence, 224 residues long: Ribose-5-phosphate isomerase A (224 aa).

Substrate-binding positions include 32-35 (TGST), 85-88 (DGAD), and 98-101 (KGGG). The Proton acceptor role is filled by Glu107. Lys125 contributes to the substrate binding site.

The protein belongs to the ribose 5-phosphate isomerase family. As to quaternary structure, homodimer.

It catalyses the reaction aldehydo-D-ribose 5-phosphate = D-ribulose 5-phosphate. The protein operates within carbohydrate degradation; pentose phosphate pathway; D-ribose 5-phosphate from D-ribulose 5-phosphate (non-oxidative stage): step 1/1. In terms of biological role, catalyzes the reversible conversion of ribose-5-phosphate to ribulose 5-phosphate. In Pseudomonas putida (strain ATCC 700007 / DSM 6899 / JCM 31910 / BCRC 17059 / LMG 24140 / F1), this protein is Ribose-5-phosphate isomerase A.